A 199-amino-acid chain; its full sequence is ATP-dependent Clp protease proteolytic subunit (199 aa).

Ser-97 (nucleophile) is an active-site residue. His-122 is an active-site residue.

The protein belongs to the peptidase S14 family. As to quaternary structure, fourteen ClpP subunits assemble into 2 heptameric rings which stack back to back to give a disk-like structure with a central cavity, resembling the structure of eukaryotic proteasomes.

The protein localises to the cytoplasm. It carries out the reaction Hydrolysis of proteins to small peptides in the presence of ATP and magnesium. alpha-casein is the usual test substrate. In the absence of ATP, only oligopeptides shorter than five residues are hydrolyzed (such as succinyl-Leu-Tyr-|-NHMec, and Leu-Tyr-Leu-|-Tyr-Trp, in which cleavage of the -Tyr-|-Leu- and -Tyr-|-Trp bonds also occurs).. In terms of biological role, cleaves peptides in various proteins in a process that requires ATP hydrolysis. Has a chymotrypsin-like activity. Plays a major role in the degradation of misfolded proteins. This is ATP-dependent Clp protease proteolytic subunit from Geotalea uraniireducens (strain Rf4) (Geobacter uraniireducens).